The primary structure comprises 711 residues: Hydroperoxide isomerase ALOXE3 (711 aa).

Positions 2-119 (AVYRLCVTTG…TVELRPGTAR (118 aa)) constitute a PLAT domain. The 593-residue stretch at 119–711 (RTICQDALPL…PPLIENSVSI (593 aa)) folds into the Lipoxygenase domain. 5 residues coordinate Fe cation: H408, H413, H588, N592, and I711.

The protein belongs to the lipoxygenase family. It depends on Fe cation as a cofactor.

It is found in the cytoplasm. The catalysed reaction is a hydroperoxyeicosatetraenoate = a hydroxy-epoxy-eicosatetraenoate. The enzyme catalyses a hydroperoxyeicosatetraenoate = an oxoeicosatetraenoate + H2O. It catalyses the reaction (12R)-hydroperoxy-(5Z,8Z,10E,14Z)-eicosatetraenoate = (8R)-hydroxy-(11R,12R)-epoxy-(5Z,9E,14Z)-eicosatrienoate. It carries out the reaction (12S)-hydroperoxy-(5Z,8Z,10E,14Z)-eicosatetraenoate = (8R)-hydroxy-(11S,12S)-epoxy-(5Z,9E,14Z)-eicosatrienoate. The catalysed reaction is (12S)-hydroperoxy-(5Z,8Z,10E,14Z)-eicosatetraenoate = (10R)-hydroxy-(11S,12S)-epoxy-(5Z,8Z,14Z)-eicosatrienoate. The enzyme catalyses (15S)-hydroperoxy-(5Z,8Z,11Z,13E)-eicosatetraenoate = (13R)-hydroxy-(14S,15S)-epoxy-(5Z,8Z,11Z)-eicosatrienoate. It catalyses the reaction (5S)-hydroperoxy-(6E,8Z,11Z,14Z)-eicosatetraenoate = 7R-hydroxy-5S,6S-epoxy-(8Z,11Z,14Z)-eicosatrienoate. It carries out the reaction (13S)-hydroperoxy-(9Z,11E)-octadecadienoate = 11-hydroxy-(12S,13S)-epoxy-(9Z)-octadecenoate. The catalysed reaction is N-[omega-(9R)-hydroperoxy-(10E,12Z)-octadecadienoyloxy]acyl-beta-D-glucosyl-(1&lt;-&gt;1)-octadecasphing-4E-enine = a N-[omega-(9R,10R)-epoxy-(13R)-hydroxy-(11E)-octadecenoyloxy]acyl-beta-D-glucosyl-(1&lt;-&gt;1)-sphing-4E-enine. The enzyme catalyses a N-[omega-(9R)-hydroperoxy-(10E,12Z)-octadecadienoyloxy]-acylsphin-4E-enine = a N-[omega-(9R,10R)-epoxy-(13R)-hydroxy-(11E)-octadecenoyloxy]-acylsphing-4E-enine. It catalyses the reaction (12R)-hydroperoxy-(5Z,8Z,10E,14Z)-eicosatetraenoate = 12-oxo-(5Z,8Z,10E,14Z)-eicosatetraenoate + H2O. It carries out the reaction (12S)-hydroperoxy-(5Z,8Z,10E,14Z)-eicosatetraenoate = 12-oxo-(5Z,8Z,10E,14Z)-eicosatetraenoate + H2O. The catalysed reaction is (15S)-hydroperoxy-(5Z,8Z,11Z,13E)-eicosatetraenoate = 15-oxo-(5Z,8Z,11Z,13E)-eicosatetraenoate + H2O. The enzyme catalyses (13S)-hydroperoxy-(9Z,11E)-octadecadienoate = 13-oxo-(9Z,11E)-octadecadienoate + H2O. It catalyses the reaction (8S)-hydroperoxy-(5Z,9E,11Z,14Z)-eicosatetraenoate = (10R)-hydroxy-(8S,9S)-epoxy-(5Z,11Z,14Z)-eicosatrienoate. It carries out the reaction (8R)-hydroperoxy-(5Z,9E,11Z,14Z)-eicosatetraenoate = 8-oxo-(5Z,9E,11Z,14Z)-eicosatetraenoate + H2O. The catalysed reaction is (8S)-hydroperoxy-(5Z,9E,11Z,14Z)-eicosatetraenoate = 8-oxo-(5Z,9E,11Z,14Z)-eicosatetraenoate + H2O. The protein operates within lipid metabolism; hydroperoxy eicosatetraenoic acid biosynthesis. It functions in the pathway lipid metabolism; sphingolipid metabolism. Non-heme iron-containing lipoxygenase which is atypical in that it displays a prominent hydroperoxide isomerase activity and a reduced lipoxygenases activity. The hydroperoxide isomerase activity catalyzes the isomerization of hydroperoxides, derived from arachidonic and linoleic acid by ALOX12B, into hepoxilin-type epoxyalcohols and ketones. In presence of oxygen, oxygenates polyunsaturated fatty acids, including arachidonic acid, to produce fatty acid hydroperoxides. In the skin, acts downstream of ALOX12B on the linoleate moiety of esterified omega-hydroxyacyl-sphingosine (EOS) ceramides to produce an epoxy-ketone derivative, a crucial step in the conjugation of omega-hydroxyceramide to membrane proteins. Therefore plays a crucial role in the synthesis of corneocytes lipid envelope and the establishment of the skin barrier to water loss. In parallel, it may have a signaling function in barrier formation through the production of hepoxilins metabolites. Also plays a role in adipocyte differentiation through hepoxilin A3 and hepoxilin B3 production which in turn activate PPARG. Through the production of hepoxilins in the spinal cord, it may regulate inflammatory tactile allodynia. The polypeptide is Hydroperoxide isomerase ALOXE3 (Rattus norvegicus (Rat)).